A 440-amino-acid chain; its full sequence is Protein root UVB sensitive 3 (440 aa).

3 helical membrane-spanning segments follow: residues 109–129 (IGATFQWFLRDFTGMLGGILF), 154–174 (IGMLMDLLSPLFPSAFIVVVC), and 232–252 (FTSGNPMAIWLSFLSLTVFHM).

Belongs to the RUS1 family.

It localises to the membrane. The protein is Protein root UVB sensitive 3 of Arabidopsis thaliana (Mouse-ear cress).